The sequence spans 471 residues: Alpha-galactosidase (471 aa).

An N-terminal signal peptide occupies residues 1–18; it reads MSYIYLFITAAAVTGALG. Residues C42 and C74 are joined by a disulfide bond. 2 residues coordinate substrate: D72 and D73. N82 is a glycosylation site (N-linked (GlcNAc...) asparagine). C121 and C151 are disulfide-bonded. Position 147 (K147) interacts with substrate. D149 (nucleophile) is an active-site residue. An N-linked (GlcNAc...) asparagine glycan is attached at N175. R205 provides a ligand contact to substrate. D209 (proton donor) is an active-site residue. 2 disulfides stabilise this stretch: C221/C237 and C223/C230. Q251 contacts substrate. N270, N361, N370, N417, N422, N435, and N454 each carry an N-linked (GlcNAc...) asparagine glycan.

The protein belongs to the glycosyl hydrolase 27 family. Homotetramer.

Its subcellular location is the secreted. It catalyses the reaction Hydrolysis of terminal, non-reducing alpha-D-galactose residues in alpha-D-galactosides, including galactose oligosaccharides, galactomannans and galactolipids.. This chain is Alpha-galactosidase (MEL), found in Saccharomyces mikatae (Yeast).